A 523-amino-acid chain; its full sequence is Melanoma-associated antigen E2 (523 aa).

MAGE domains lie at 88 to 288 (LEDR…YNKA) and 311 to 502 (MNDK…YREA).

The polypeptide is Melanoma-associated antigen E2 (MAGEE2) (Homo sapiens (Human)).